The following is a 1096-amino-acid chain: Inactive phospholipase C-like protein 1 (1096 aa).

The interval 1–101 (MAEGAASREA…KKTVSFSSMP (101 aa)) is disordered. A Phosphoserine modification is found at Ser48. Positions 49-60 (GVALPGAAGVPA) are enriched in low complexity. The residue at position 78 (Ser78) is a Phosphoserine. An interaction with PPP1C region spans residues 83-222 (PSNQKCGGRK…NIWVSGLRYL (140 aa)). A Phosphothreonine modification is found at Thr94. A Phosphothreonine; by PKA modification is found at Thr94. Position 96 is a phosphoserine; by PKA (Ser96). Residues 114 to 224 (SFMQAGCELK…WVSGLRYLVS (111 aa)) enclose the PH domain. Residues 399–543 (QDMTQPLSHY…LKNMIIVKGK (145 aa)) enclose the PI-PLC X-box domain. The segment at 544–568 (KLPSESDLLEGEVTDEDEEAEMSRR) is interaction with GABA A beta subunit. A compositionally biased stretch (acidic residues) spans 550 to 563 (DLLEGEVTDEDEEA). The tract at residues 550–569 (DLLEGEVTDEDEEAEMSRRM) is disordered. Residue Thr557 is modified to Phosphothreonine. A Phosphoserine modification is found at Ser570. The 117-residue stretch at 586–702 (LSDLVSICKS…GYVLRPSIMR (117 aa)) folds into the PI-PLC Y-box domain. In terms of domain architecture, C2 spans 702–831 (RDEVSYFSAN…PGYRHVPLRS (130 aa)). A coiled-coil region spans residues 1040–1060 (DLLKNAKNEAVENIKQIQLAC). Residues 1067–1096 (KGPGGGSEAKGKRSLEAIEEKESSEENGKL) form a disordered region. Basic and acidic residues predominate over residues 1075 to 1096 (AKGKRSLEAIEEKESSEENGKL). Ser1080 is subject to Phosphoserine.

Interacts with PPP2CA, Ins(1,4,5)P3, Ins(1,4,5,6)P4 GABARAP, GABA receptor beta subunits, GABA receptor gamma-2 subunits and PPP1C. May form a ternary complex with GABA receptor beta subunit and GABARAP. The formation of a ternary complex with GABA receptor beta subunit and GABARAP could be the key step for facilitating the association of GABARAP with the GABA receptor gamma-2 subunit and to allow it to be transported at the right destination. Post-translationally, phosphorylated by the catalytic subunit of PKA. Phosphorylation of Thr-94 resulted in dissociation of PPP1C from PRIP1.

It is found in the cytoplasm. Involved in an inositol phospholipid-based intracellular signaling cascade. Shows no PLC activity to phosphatidylinositol 4,5-bisphosphate and phosphatidylinositol. Component in the phospho-dependent endocytosis process of GABA A receptor. Acts as an inhibitor of PPP1C. Involved in the assembly and/or the trafficking of gamma-2 subunit-containing GABA A receptors. This is Inactive phospholipase C-like protein 1 (Plcl1) from Mus musculus (Mouse).